Reading from the N-terminus, the 428-residue chain is MTWFIDRRLNGKNKSTVNRQRFLRRYKAQIKQSISEAINKRSVTDVDSGESVSIPTDDISEPMFHQGRGGLRHRVHPGNDHFIQNDRIERPQGGGGGGSGSGQGQASQDGEGQDEFVFQISKDEYLDLLFEDLALPNLKKNQHRQLNEYKTHRAGFTSNGVPANISVVRSLQNSLARRTAMTAGKRRELHALETELETISHSEPAQLLEEERLRREIAELRAKIERVPFIDTFDLRYKNYEKRPEPSSQAVMFCLMDVSGSMDQATKDMAKRFYILLYLFLSRTYKNVEVVYIRHHTQAKEVDEHEFFYSQETGGTIVSSALKLMDEVVKERYDPGQWNIYAAQASDGDNWADDSPLCHEILAKKLLPVVRYYSYIEITRRAHQTLWREYEHLQAKFDNFAMQHIRDQEDIYPVFRELFQKQSANQSA.

Over residues 78–90 (GNDHFIQNDRIER) the composition is skewed to basic and acidic residues. The interval 78–111 (GNDHFIQNDRIERPQGGGGGGSGSGQGQASQDGE) is disordered. The span at 92–103 (QGGGGGGSGSGQ) shows a compositional bias: gly residues.

The protein belongs to the UPF0229 family.

The polypeptide is UPF0229 protein YeaH (Salmonella paratyphi C (strain RKS4594)).